A 503-amino-acid chain; its full sequence is Probable cytosol aminopeptidase (503 aa).

Mn(2+) is bound by residues Lys-271 and Asp-276. The active site involves Lys-283. Mn(2+) is bound by residues Asp-294, Asp-353, and Glu-355. Arg-357 is an active-site residue.

This sequence belongs to the peptidase M17 family. The cofactor is Mn(2+).

The protein resides in the cytoplasm. The enzyme catalyses Release of an N-terminal amino acid, Xaa-|-Yaa-, in which Xaa is preferably Leu, but may be other amino acids including Pro although not Arg or Lys, and Yaa may be Pro. Amino acid amides and methyl esters are also readily hydrolyzed, but rates on arylamides are exceedingly low.. The catalysed reaction is Release of an N-terminal amino acid, preferentially leucine, but not glutamic or aspartic acids.. In terms of biological role, presumably involved in the processing and regular turnover of intracellular proteins. Catalyzes the removal of unsubstituted N-terminal amino acids from various peptides. The chain is Probable cytosol aminopeptidase from Chlorobium phaeobacteroides (strain DSM 266 / SMG 266 / 2430).